The sequence spans 2157 residues: Mediator of RNA polymerase II transcription subunit 12-like protein (2157 aa).

Residues 1–31 (MAAFGLLSYEQRPLKRPRLGPPDVYPQDPKQ) are disordered. A Phosphothreonine modification is found at Thr462. Over residues 1437–1456 (ELEKGQHLGSSSKKERDRQK) the composition is skewed to basic and acidic residues. 3 disordered regions span residues 1437–1461 (ELEK…KSMS), 1724–1807 (RSYY…SQMT), and 2040–2157 (IDAV…PSHF). Residues 1771 to 1780 (TKGRKRKTKS) are compositionally biased toward basic residues. 3 stretches are compositionally biased toward low complexity: residues 2063–2076 (PRQQ…RLLQ), 2083–2101 (QQPQ…QSQA), and 2116–2136 (RQGL…RQLQ). Residues 2137 to 2148 (KQLSSNQPQQGV) show a composition bias toward polar residues.

This sequence belongs to the Mediator complex subunit 12 family. As to quaternary structure, may be a component of the Mediator complex, which is known to be composed of MED1, MED4, MED6, MED7, MED8, MED9, MED10, MED11, MED12, MED13, MED13L, MED14, MED15, MED16, MED17, MED18, MED19, MED20, MED21, MED22, MED23, MED24, MED25, MED26, MED27, MED29, MED30, MED31, CCNC, CDK8 and CDC2L6/CDK11. The MED12, MED13, CCNC and CDK8 subunits form a distinct module termed the CDK8 module. Mediator containing the CDK8 module is less active than Mediator lacking this module in supporting transcriptional activation. Individual preparations of the Mediator complex lacking one or more distinct subunits have been variously termed ARC, CRSP, DRIP, PC2, SMCC and TRAP.

The protein localises to the nucleus. Its function is as follows. May be a component of the Mediator complex, a coactivator involved in the regulated transcription of nearly all RNA polymerase II-dependent genes. Mediator functions as a bridge to convey information from gene-specific regulatory proteins to the basal RNA polymerase II transcription machinery. Mediator is recruited to promoters by direct interactions with regulatory proteins and serves as a scaffold for the assembly of a functional preinitiation complex with RNA polymerase II and the general transcription factors. The protein is Mediator of RNA polymerase II transcription subunit 12-like protein (Med12l) of Mus musculus (Mouse).